Reading from the N-terminus, the 384-residue chain is MVQFFKRPLLDIVHNHLIEYPTPVNIHYFWNFGFLAFICLAVQIITGIFLAIHYTPHVDLAFYSVEHIIRDVNYGWLLRYAHANGASIFFIIIYIHISRGLYYGSYVAPRHFTWVVGVFILLLIMATAFMGYVLPWGQISLWGATVITNLVSAVPLVGNSIVTWLWGGFSVDNATLNRFFSFHYLFPFIIVAIAFVHMAFLHQKGSGNPLGLIQPVDKISMYPYFIIKDAFGLVLFLLFFSLFVYFLPNLLGHPDNYIEANPIVTPNHIVPEWYFLPFYAILRSIPHKLGGVIAIIISILILAFLPWITNINVRSSLFRPLYKKLFWILFSIVLILGWIGGKPVEMPYVVIGQLITFLYFVYFLIFIPFLGRLEKFLVNYKTVY.

Transmembrane regions (helical) follow at residues 32–52 (FGFL…FLAI), 76–98 (WLLR…IHIS), 113–133 (TWVV…MGYV), and 179–199 (FFSF…VHMA). Heme b contacts are provided by His82 and His96. His183 and His197 together coordinate heme b. Residue His202 participates in a ubiquinone binding. 4 helical membrane-spanning segments follow: residues 225–245 (FIIK…LFVY), 289–309 (LGGV…PWIT), 321–341 (LYKK…WIGG), and 348–368 (YVVI…IFIP).

Belongs to the cytochrome b family. The main subunits of complex b-c1 are: cytochrome b, cytochrome c1 and the Rieske protein. Requires heme b as cofactor.

It localises to the mitochondrion inner membrane. Component of the ubiquinol-cytochrome c reductase complex (complex III or cytochrome b-c1 complex) that is part of the mitochondrial respiratory chain. The b-c1 complex mediates electron transfer from ubiquinol to cytochrome c. Contributes to the generation of a proton gradient across the mitochondrial membrane that is then used for ATP synthesis. The sequence is that of Cytochrome b (MT-CYB) from Cyanidium caldarium (Red alga).